A 514-amino-acid polypeptide reads, in one-letter code: GMP synthase [glutamine-hydrolyzing] (514 aa).

Positions M9–D199 constitute a Glutamine amidotransferase type-1 domain. Residue C86 is the Nucleophile of the active site. Residues H173 and E175 contribute to the active site. Residues W200–R389 form the GMPS ATP-PPase domain. Position 227–233 (S227–S233) interacts with ATP.

In terms of assembly, homodimer.

It catalyses the reaction XMP + L-glutamine + ATP + H2O = GMP + L-glutamate + AMP + diphosphate + 2 H(+). It functions in the pathway purine metabolism; GMP biosynthesis; GMP from XMP (L-Gln route): step 1/1. Its function is as follows. Catalyzes the synthesis of GMP from XMP. The sequence is that of GMP synthase [glutamine-hydrolyzing] from Exiguobacterium sibiricum (strain DSM 17290 / CCUG 55495 / CIP 109462 / JCM 13490 / 255-15).